The chain runs to 203 residues: Pyridoxal 5'-phosphate synthase subunit PdxT (203 aa).

Position 52–54 (52–54 (GES)) interacts with L-glutamine. Catalysis depends on cysteine 84, which acts as the Nucleophile. L-glutamine is bound by residues arginine 116 and 144 to 145 (IR). Catalysis depends on charge relay system residues histidine 184 and glutamate 186.

This sequence belongs to the glutaminase PdxT/SNO family. As to quaternary structure, in the presence of PdxS, forms a dodecamer of heterodimers. Only shows activity in the heterodimer.

The enzyme catalyses aldehydo-D-ribose 5-phosphate + D-glyceraldehyde 3-phosphate + L-glutamine = pyridoxal 5'-phosphate + L-glutamate + phosphate + 3 H2O + H(+). The catalysed reaction is L-glutamine + H2O = L-glutamate + NH4(+). Its pathway is cofactor biosynthesis; pyridoxal 5'-phosphate biosynthesis. Its function is as follows. Catalyzes the hydrolysis of glutamine to glutamate and ammonia as part of the biosynthesis of pyridoxal 5'-phosphate. The resulting ammonia molecule is channeled to the active site of PdxS. This Aeropyrum pernix (strain ATCC 700893 / DSM 11879 / JCM 9820 / NBRC 100138 / K1) protein is Pyridoxal 5'-phosphate synthase subunit PdxT.